Consider the following 210-residue polypeptide: Probable nicotinate-nucleotide adenylyltransferase (210 aa).

It belongs to the NadD family.

It catalyses the reaction nicotinate beta-D-ribonucleotide + ATP + H(+) = deamido-NAD(+) + diphosphate. Its pathway is cofactor biosynthesis; NAD(+) biosynthesis; deamido-NAD(+) from nicotinate D-ribonucleotide: step 1/1. In terms of biological role, catalyzes the reversible adenylation of nicotinate mononucleotide (NaMN) to nicotinic acid adenine dinucleotide (NaAD). In Vesicomyosocius okutanii subsp. Calyptogena okutanii (strain HA), this protein is Probable nicotinate-nucleotide adenylyltransferase.